Reading from the N-terminus, the 301-residue chain is Phospholipase A1 VesT1.02 (301 aa).

6 disulfide bridges follow: Cys-87/Cys-294, Cys-176/Cys-245, Cys-181/Cys-262, Cys-219/Cys-228, Cys-240/Cys-246, and Cys-267/Cys-269. The active-site Nucleophile is Ser-137. Asp-165 serves as the catalytic Charge relay system. Residue His-230 is the Charge relay system of the active site.

The protein belongs to the AB hydrolase superfamily. Lipase family. Is not glycosylated. In terms of tissue distribution, expressed by the venom gland.

Its subcellular location is the secreted. It carries out the reaction a 1,2-diacyl-sn-glycero-3-phosphocholine + H2O = a 2-acyl-sn-glycero-3-phosphocholine + a fatty acid + H(+). In terms of biological role, catalyzes the hydrolysis of phosphatidylcholine with phospholipase A1 activity. Shows hemolytic activity. This Vespa tropica (Greater banded hornet) protein is Phospholipase A1 VesT1.02.